The following is a 564-amino-acid chain: MTETAKRPLYVPHAGPSLLEMPLLNKGSAFSTQERIDFNLQGLLPHNIETIEEQTERAYSQYNLCNTDLDRHIFLRSIQDNNETLFFRLLEEHLEEMMPIIYTPTVGQACQEFSKIYRTHRGLFISYPDRERIDDILRSATKNNVKIVVVTDSERILGLGDQGIGGMGIPIGKLSLYTACGGISPAYTLPVVLDVGTNNPDLLNDPMYMGWRHERVSGAQYEEFVDLFIQAIKRRWPNVLLQFEDFAQTNAMPLLERYKDELCCFNDDIQGTAAVAVGTLLAACKAKGEKLSEQTVTFVGAGSAGCGIAEQIIAAMQLEGLDEAQARRRIFMVDRWGLLTDDMSNLLDFQHRLAQKRADLGAWGGQQGDDLALLEVIRNARPTVLIGVSGQRGLFSEEVIRELHSHCKQPLVMPLSNPTSRVEATPQEILNWTDGQALVATGSPFQPVQVGDKRIPIAQCNNAYIFPGIGLGVIAARANRVTEGMLMAAANALANCSPIVTQGEGAVLPALGDIREVSKRIAVAVAKQAQAEGKALHTSDEVLNDAIEANFWFPRYRAYRRTSF.

Residue Y102 is the Proton donor of the active site. R155 contacts NAD(+). Residue K173 is the Proton acceptor of the active site. A divalent metal cation contacts are provided by E244, D245, and D268. NAD(+)-binding residues include D268 and N417.

The protein belongs to the malic enzymes family. As to quaternary structure, homotetramer. The cofactor is Mg(2+). Requires Mn(2+) as cofactor.

It catalyses the reaction (S)-malate + NAD(+) = pyruvate + CO2 + NADH. The enzyme catalyses oxaloacetate + H(+) = pyruvate + CO2. This chain is NAD-dependent malic enzyme, found in Pseudomonas aeruginosa (strain ATCC 15692 / DSM 22644 / CIP 104116 / JCM 14847 / LMG 12228 / 1C / PRS 101 / PAO1).